Consider the following 435-residue polypeptide: Transcription factor gkaF (435 aa).

The span at 1 to 19 (MGRPQRGDTAKERRERQDK) shows a compositional bias: basic and acidic residues. 3 disordered regions span residues 1 to 40 (MGRPQRGDTAKERRERQDKVTSPPESGPISQSGLSDTVDW), 115 to 158 (STTA…SSQS), and 231 to 257 (FSSESASPHVNRPPIQQQQSPSRFLAP). Polar residues predominate over residues 28–40 (PISQSGLSDTVDW). Residues 143–158 (SQSSDSSKPSSTSSQS) show a composition bias toward low complexity.

It localises to the nucleus. Transcription factor; part of the gene cluster that mediates the biosynthesis of GKK1032, fungal natural products containing a macrocyclic para-cyclophane connected to a decahydrofluorene ring system that show potent antitumor activities. This is Transcription factor gkaF from Penicillium citrinum.